We begin with the raw amino-acid sequence, 496 residues long: Probable cytosol aminopeptidase (496 aa).

K258 and D263 together coordinate Mn(2+). Residue K270 is part of the active site. D281, D340, and E342 together coordinate Mn(2+). The active site involves R344.

It belongs to the peptidase M17 family. It depends on Mn(2+) as a cofactor.

It is found in the cytoplasm. The catalysed reaction is Release of an N-terminal amino acid, Xaa-|-Yaa-, in which Xaa is preferably Leu, but may be other amino acids including Pro although not Arg or Lys, and Yaa may be Pro. Amino acid amides and methyl esters are also readily hydrolyzed, but rates on arylamides are exceedingly low.. It catalyses the reaction Release of an N-terminal amino acid, preferentially leucine, but not glutamic or aspartic acids.. Its function is as follows. Presumably involved in the processing and regular turnover of intracellular proteins. Catalyzes the removal of unsubstituted N-terminal amino acids from various peptides. The polypeptide is Probable cytosol aminopeptidase (Helicobacter pylori (strain HPAG1)).